A 26-amino-acid polypeptide reads, in one-letter code: MGIIYLILFLIVIYLLYRILDVLEQK.

Residues 3 to 23 traverse the membrane as a helical segment; that stretch reads IIYLILFLIVIYLLYRILDVL.

It localises to the membrane. This is an uncharacterized protein from Helicobacter pylori (strain J99 / ATCC 700824) (Campylobacter pylori J99).